Here is a 411-residue protein sequence, read N- to C-terminus: Arginine deiminase (411 aa).

Residue C401 is the Amidino-cysteine intermediate of the active site.

It belongs to the arginine deiminase family.

Its subcellular location is the cytoplasm. It carries out the reaction L-arginine + H2O = L-citrulline + NH4(+). The protein operates within amino-acid degradation; L-arginine degradation via ADI pathway; carbamoyl phosphate from L-arginine: step 1/2. This is Arginine deiminase from Staphylococcus aureus (strain JH9).